The following is a 100-amino-acid chain: uncharacterized protein (100 aa).

A run of 2 helical transmembrane segments spans residues 17 to 37 and 78 to 98; these read IIIL…SVSF and MVDK…TIPF.

Its subcellular location is the endoplasmic reticulum membrane. This is an uncharacterized protein from Saccharomyces cerevisiae (strain ATCC 204508 / S288c) (Baker's yeast).